Consider the following 493-residue polypeptide: MVKEIKELTPKSVSSSRWYNDLVIKADLAENSAVRGCMVIKPYGYAIWEKIQRQLDEMFKETGHVNAYFPLFIPKSFLNREASHIEGFAKECAIVTHYRLKNDPIGKGIIVDSEAKLEEELIIRPTSESIIWNTYKKWIHSYRDLPILINQWANVVRWEMRTRLFLRTAEFLWQEGHTAHTSKEEAIEETLKILDIYANFVEQYMAIPVTKGVKTPCERFAGATDTYCIETLMQDGKALQAGTSHFLGQNFAKAFDVQFLNKKGKREYVWATSWGVSTRLMGALIMMHSDDNGLVLPPKLAPCQIVIIPVSKDRTSLEDINEKATNIINDFKNLDINVKYDNTDNKKPGWKFAEYELKGIPIRLTLGTRDLENGTIEVSRRDTLTKETISINNITDYANNLLNDIQQNIYQKALDYRSANTVYVDNYDEFKERIEEGGFIMAHWDGTAKTEEQIKKETKATIRCIPLNGDITPGIDMLTGMPSKQRVIFARAY.

It belongs to the class-II aminoacyl-tRNA synthetase family. ProS type 3 subfamily. As to quaternary structure, homodimer.

It is found in the cytoplasm. It catalyses the reaction tRNA(Pro) + L-proline + ATP = L-prolyl-tRNA(Pro) + AMP + diphosphate. Catalyzes the attachment of proline to tRNA(Pro) in a two-step reaction: proline is first activated by ATP to form Pro-AMP and then transferred to the acceptor end of tRNA(Pro). The protein is Proline--tRNA ligase of Azobacteroides pseudotrichonymphae genomovar. CFP2.